We begin with the raw amino-acid sequence, 48 residues long: Osteocalcin (48 aa).

The 44-residue stretch at 1–44 (AGTAPADLTVAQLESLKEVCEANLACEHMMDVSGIIAAYTAYYG) folds into the Gla domain. Positions 14, 18, 21, and 27 each coordinate Ca(2+). A 4-carboxyglutamate mark is found at Glu-14, Glu-18, and Glu-21. Cys-20 and Cys-26 are oxidised to a cystine.

Belongs to the osteocalcin/matrix Gla protein family. Post-translationally, gamma-carboxyglutamate residues are formed by vitamin K dependent carboxylation by GGCX. These residues are essential for the binding of calcium.

The protein localises to the secreted. Its subcellular location is the extracellular space. It localises to the extracellular matrix. Functionally, the carboxylated form is one of the main organic components of the bone matrix, which constitutes 1-2% of the total bone protein. The carboxylated form binds strongly to apatite and calcium. The protein is Osteocalcin (bglap) of Cyprinus carpio (Common carp).